The following is a 288-amino-acid chain: Aquaporin PIP2-4 (288 aa).

Residues 1–24 (MAKDIEASGPEAGEFSAKDYTDPP) form a disordered region. 2 consecutive transmembrane segments (helical) span residues 42–62 (AVIA…ATVI) and 79–99 (CGGV…FILV). The short motif at 111 to 113 (NPA) is the NPA 1 element. 3 consecutive transmembrane segments (helical) span residues 130-150 (LLYI…VKGF), 172-192 (GTGL…VFSA), and 206-226 (VLAP…TIPI). Positions 232–234 (NPA) match the NPA 2 motif. The helical transmembrane segment at 254 to 274 (IFWVGPLIGAAIAAAYHQYVL) threads the bilayer.

It belongs to the MIP/aquaporin (TC 1.A.8) family. PIP (TC 1.A.8.11) subfamily. Homomers. May interact with PIP1-2 to form heteromers. Expressed in the root growing zone at 5-6 mm from the root tip.

The protein localises to the cell membrane. Its function is as follows. Water channel required to facilitate the transport of water across cell membrane. Active as homomers. Increased activity when heteromerization with PIP1-2. In Zea mays (Maize), this protein is Aquaporin PIP2-4 (PIP2-4).